Consider the following 323-residue polypeptide: Cyclin-H (323 aa).

The disordered stretch occupies residues 296–323 (GYEDDGYISKKPKTEEDEWTDEDFGDSL). Over residues 310 to 323 (EEDEWTDEDFGDSL) the composition is skewed to acidic residues.

This sequence belongs to the cyclin family. Cyclin C subfamily. In terms of assembly, associates primarily with CDK7 and MAT1 to form the CAK complex. CAK can further associate with the core-TFIIH to form the TFIIH basal transcription factor.

Its subcellular location is the nucleus. Functionally, regulates CDK7, the catalytic subunit of the CDK-activating kinase (CAK) enzymatic complex. CAK activates the cyclin-associated kinases CDK1, CDK2, CDK4 and CDK6 by threonine phosphorylation. CAK complexed to the core-TFIIH basal transcription factor activates RNA polymerase II by serine phosphorylation of the repetitive C-terminal domain (CTD) of its large subunit (POLR2A), allowing its escape from the promoter and elongation of the transcripts. Involved in cell cycle control and in RNA transcription by RNA polymerase II. Its expression and activity are constant throughout the cell cycle. This Xenopus laevis (African clawed frog) protein is Cyclin-H (ccnh).